We begin with the raw amino-acid sequence, 281 residues long: Energy-coupling factor transporter ATP-binding protein EcfA1 (281 aa).

The ABC transporter domain occupies 7 to 242; that stretch reads IAAEDITFRY…NQDLIKIGLD (236 aa). 42-49 serves as a coordination point for ATP; that stretch reads GHNGSGKS.

This sequence belongs to the ABC transporter superfamily. Energy-coupling factor EcfA family. In terms of assembly, forms a stable energy-coupling factor (ECF) transporter complex composed of 2 membrane-embedded substrate-binding proteins (S component), 2 ATP-binding proteins (A component) and 2 transmembrane proteins (T component).

Its subcellular location is the cell membrane. In terms of biological role, ATP-binding (A) component of a common energy-coupling factor (ECF) ABC-transporter complex. Unlike classic ABC transporters this ECF transporter provides the energy necessary to transport a number of different substrates. This is Energy-coupling factor transporter ATP-binding protein EcfA1 from Bacillus licheniformis (strain ATCC 14580 / DSM 13 / JCM 2505 / CCUG 7422 / NBRC 12200 / NCIMB 9375 / NCTC 10341 / NRRL NRS-1264 / Gibson 46).